We begin with the raw amino-acid sequence, 307 residues long: ATP synthase gamma chain (307 aa).

This sequence belongs to the ATPase gamma chain family. In terms of assembly, F-type ATPases have 2 components, CF(1) - the catalytic core - and CF(0) - the membrane proton channel. CF(1) has five subunits: alpha(3), beta(3), gamma(1), delta(1), epsilon(1). CF(0) has three main subunits: a, b and c.

It localises to the cell membrane. Produces ATP from ADP in the presence of a proton gradient across the membrane. The gamma chain is believed to be important in regulating ATPase activity and the flow of protons through the CF(0) complex. The chain is ATP synthase gamma chain from Mycolicibacterium smegmatis (strain ATCC 700084 / mc(2)155) (Mycobacterium smegmatis).